The following is a 180-amino-acid chain: Cytochrome b6-f complex iron-sulfur subunit (180 aa).

A helical membrane pass occupies residues 21–43 (LLTFGTITGTALGALYPVVKYFI). The 97-residue stretch at 66–162 (VSEYLAKHLP…ATVTEDDKLV (97 aa)) folds into the Rieske domain. [2Fe-2S] cluster contacts are provided by cysteine 108, histidine 110, cysteine 126, and histidine 129. Cysteine 113 and cysteine 128 are disulfide-bonded.

It belongs to the Rieske iron-sulfur protein family. The 4 large subunits of the cytochrome b6-f complex are cytochrome b6, subunit IV (17 kDa polypeptide, PetD), cytochrome f and the Rieske protein, while the 4 small subunits are PetG, PetL, PetM and PetN. The complex functions as a dimer. It depends on [2Fe-2S] cluster as a cofactor.

Its subcellular location is the cellular thylakoid membrane. The catalysed reaction is 2 oxidized [plastocyanin] + a plastoquinol + 2 H(+)(in) = 2 reduced [plastocyanin] + a plastoquinone + 4 H(+)(out). Component of the cytochrome b6-f complex, which mediates electron transfer between photosystem II (PSII) and photosystem I (PSI), cyclic electron flow around PSI, and state transitions. The polypeptide is Cytochrome b6-f complex iron-sulfur subunit (Thermosynechococcus vestitus (strain NIES-2133 / IAM M-273 / BP-1)).